The sequence spans 616 residues: Dihydroxy-acid dehydratase (616 aa).

Residue Asp81 participates in Mg(2+) binding. A [2Fe-2S] cluster-binding site is contributed by Cys122. Positions 123 and 124 each coordinate Mg(2+). Lys124 carries the N6-carboxylysine modification. Cys195 is a binding site for [2Fe-2S] cluster. Glu491 provides a ligand contact to Mg(2+). Ser517 serves as the catalytic Proton acceptor.

It belongs to the IlvD/Edd family. Homodimer. Requires [2Fe-2S] cluster as cofactor. Mg(2+) is required as a cofactor.

It catalyses the reaction (2R)-2,3-dihydroxy-3-methylbutanoate = 3-methyl-2-oxobutanoate + H2O. The catalysed reaction is (2R,3R)-2,3-dihydroxy-3-methylpentanoate = (S)-3-methyl-2-oxopentanoate + H2O. It participates in amino-acid biosynthesis; L-isoleucine biosynthesis; L-isoleucine from 2-oxobutanoate: step 3/4. Its pathway is amino-acid biosynthesis; L-valine biosynthesis; L-valine from pyruvate: step 3/4. In terms of biological role, functions in the biosynthesis of branched-chain amino acids. Catalyzes the dehydration of (2R,3R)-2,3-dihydroxy-3-methylpentanoate (2,3-dihydroxy-3-methylvalerate) into 2-oxo-3-methylpentanoate (2-oxo-3-methylvalerate) and of (2R)-2,3-dihydroxy-3-methylbutanoate (2,3-dihydroxyisovalerate) into 2-oxo-3-methylbutanoate (2-oxoisovalerate), the penultimate precursor to L-isoleucine and L-valine, respectively. This chain is Dihydroxy-acid dehydratase, found in Serratia proteamaculans (strain 568).